The sequence spans 467 residues: Cysteine--tRNA ligase (467 aa).

Cysteine 30 provides a ligand contact to Zn(2+). The 'HIGH' region signature appears at 32–42; sequence PTVYNYIHIGN. Positions 210, 235, and 239 each coordinate Zn(2+). Residues 267–271 carry the 'KMSKS' region motif; it reads KMSKS. Lysine 270 contributes to the ATP binding site. Residue serine 271 is modified to Phosphoserine.

The protein belongs to the class-I aminoacyl-tRNA synthetase family. In terms of assembly, monomer. The cofactor is Zn(2+).

It is found in the cytoplasm. It catalyses the reaction tRNA(Cys) + L-cysteine + ATP = L-cysteinyl-tRNA(Cys) + AMP + diphosphate. This is Cysteine--tRNA ligase from Geobacillus thermodenitrificans (strain NG80-2).